The sequence spans 63 residues: Large ribosomal subunit protein uL29 (63 aa).

The protein belongs to the universal ribosomal protein uL29 family.

In Yersinia pseudotuberculosis serotype O:1b (strain IP 31758), this protein is Large ribosomal subunit protein uL29.